A 353-amino-acid chain; its full sequence is Glutamate 5-kinase (353 aa).

Lys8 contributes to the ATP binding site. Residues Ser47, Asp134, and Asn146 each contribute to the substrate site. 198 to 204 (TGGIRSK) lines the ATP pocket. A PUA domain is found at 262 to 339 (AGKIYVNKGA…SDLKKILGYE (78 aa)).

This sequence belongs to the glutamate 5-kinase family.

It is found in the cytoplasm. It carries out the reaction L-glutamate + ATP = L-glutamyl 5-phosphate + ADP. Its pathway is amino-acid biosynthesis; L-proline biosynthesis; L-glutamate 5-semialdehyde from L-glutamate: step 1/2. In terms of biological role, catalyzes the transfer of a phosphate group to glutamate to form L-glutamate 5-phosphate. The sequence is that of Glutamate 5-kinase from Thermotoga maritima (strain ATCC 43589 / DSM 3109 / JCM 10099 / NBRC 100826 / MSB8).